We begin with the raw amino-acid sequence, 395 residues long: Imidazolonepropionase (395 aa).

Residues His-72 and His-74 each coordinate Fe(3+). The Zn(2+) site is built by His-72 and His-74. Arg-81, Tyr-144, and His-174 together coordinate 4-imidazolone-5-propanoate. Tyr-144 serves as a coordination point for N-formimidoyl-L-glutamate. His-231 provides a ligand contact to Fe(3+). A Zn(2+)-binding site is contributed by His-231. Residue Glu-234 participates in 4-imidazolone-5-propanoate binding. Asp-306 is a Fe(3+) binding site. Residue Asp-306 participates in Zn(2+) binding.

It belongs to the metallo-dependent hydrolases superfamily. HutI family. It depends on Zn(2+) as a cofactor. The cofactor is Fe(3+).

The protein resides in the cytoplasm. The enzyme catalyses 4-imidazolone-5-propanoate + H2O = N-formimidoyl-L-glutamate. The protein operates within amino-acid degradation; L-histidine degradation into L-glutamate; N-formimidoyl-L-glutamate from L-histidine: step 3/3. Catalyzes the hydrolytic cleavage of the carbon-nitrogen bond in imidazolone-5-propanoate to yield N-formimidoyl-L-glutamate. It is the third step in the universal histidine degradation pathway. This Pyrobaculum arsenaticum (strain DSM 13514 / JCM 11321 / PZ6) protein is Imidazolonepropionase.